We begin with the raw amino-acid sequence, 373 residues long: Probable di-N-acetylchitobiase 1 (373 aa).

The N-terminal stretch at 1-20 (MKIFIIISLILTILIIQSKS) is a signal peptide. The GH18 domain maps to 21–369 (KECPCSNVEL…SGMWGALNSF (349 aa)). Asparagine 48 is a glycosylation site (N-linked (GlcNAc...) asparagine). Residues 53–54 (PY) and 82–85 (NGVR) contribute to the chitin site. A glycan (N-linked (GlcNAc...) asparagine) is linked at asparagine 99. Glutamate 127 (proton donor) is an active-site residue. Residues tyrosine 128 and 191-194 (MDYD) contribute to the chitin site. Asparagine 222, asparagine 250, asparagine 269, asparagine 279, and asparagine 288 each carry an N-linked (GlcNAc...) asparagine glycan. A chitin-binding site is contributed by tryptophan 347.

The protein belongs to the glycosyl hydrolase 18 family.

It localises to the lysosome. Functionally, involved in the degradation of asparagine-linked glycoproteins. May hydrolyze of N-acetyl-beta-D-glucosamine (1-4)N-acetylglucosamine chitobiose core from the reducing end of the bond. This Dictyostelium discoideum (Social amoeba) protein is Probable di-N-acetylchitobiase 1 (ctbs1).